We begin with the raw amino-acid sequence, 546 residues long: uncharacterized protein (546 aa).

9 consecutive transmembrane segments (helical) span residues 27 to 46 (EALVLLSILFFVPGIFPFVF), 59 to 78 (NGLIQCYPVAAFFAVLALVT), 83 to 100 (FALIWWMYTVFNALYAIL), 114 to 134 (SVLFGLIYLAGGGFWFFAYAA), 143 to 163 (PLIILLTAVHFHYSAFLIPIF), 176 to 196 (MLYSWITWVILLSPLLIALGI), 204 to 224 (VIAVSIYMAAIYLHAFLVFTA), 237 to 257 (LSSAVLMITIAFSMIYSFGVF), and 268 to 288 (MIWIHGFVNAFGVILPALIGW).

The protein localises to the cell membrane. This is an uncharacterized protein from Bacillus subtilis (strain 168).